The chain runs to 352 residues: Protein RecA (352 aa).

68–75 (GPESSGKT) is a binding site for ATP.

Belongs to the RecA family.

Its subcellular location is the cytoplasm. Functionally, can catalyze the hydrolysis of ATP in the presence of single-stranded DNA, the ATP-dependent uptake of single-stranded DNA by duplex DNA, and the ATP-dependent hybridization of homologous single-stranded DNAs. It interacts with LexA causing its activation and leading to its autocatalytic cleavage. The sequence is that of Protein RecA from Clostridium perfringens (strain ATCC 13124 / DSM 756 / JCM 1290 / NCIMB 6125 / NCTC 8237 / Type A).